A 279-amino-acid chain; its full sequence is Acyl-coenzyme A thioesterase MBLAC2 (279 aa).

N-acetylserine is present on serine 2. Zn(2+) contacts are provided by histidine 83, histidine 85, aspartate 87, histidine 88, histidine 170, aspartate 189, and histidine 231. Cysteine 254 is lipidated: S-palmitoyl cysteine.

It belongs to the metallo-beta-lactamase superfamily. Glyoxalase II family. Zn(2+) serves as cofactor. Palmitoylated on Cys-254 by ZDHHC20.

Its subcellular location is the endoplasmic reticulum membrane. The protein resides in the cell membrane. The enzyme catalyses hexadecanoyl-CoA + H2O = hexadecanoate + CoA + H(+). The catalysed reaction is dodecanoyl-CoA + H2O = dodecanoate + CoA + H(+). It carries out the reaction tetradecanoyl-CoA + H2O = tetradecanoate + CoA + H(+). It catalyses the reaction octadecanoyl-CoA + H2O = octadecanoate + CoA + H(+). The enzyme catalyses a beta-lactam + H2O = a substituted beta-amino acid. Beta-lactamase activity is inhibited by sulbactam. Functionally, acyl-CoA thioesterases are a group of enzymes that catalyze the hydrolysis of acyl-CoAs to the free fatty acid and coenzyme A (CoASH), providing the potential to regulate intracellular levels of acyl-CoAs, free fatty acids and CoASH. Has an acyl-CoA thioesterase activity towards the long chain fatty acyl-CoA thioester palmitoyl-CoA (hexadecanoyl-CoA; C16:0-CoA). Displays a substrate preference for fatty acyl-CoAs with chain-lengths C12-C18. Possesses beta-lactamase activity, catalyzing the hydrolysis of penicillin G and nitrocefin. Exhibits no activity towards other beta-lactam antibiotic classes including cephalosporins (cefotaxime) and carbapenems (imipenem). The protein is Acyl-coenzyme A thioesterase MBLAC2 (MBLAC2) of Homo sapiens (Human).